Consider the following 137-residue polypeptide: Cellular retinoic acid-binding protein 1 (137 aa).

The Nuclear localization signal motif lies at 21-31 (KALGVNAMLRK). 132 to 134 (RIY) contributes to the all-trans-retinoate binding site.

It belongs to the calycin superfamily. Fatty-acid binding protein (FABP) family.

It is found in the cytoplasm. Functionally, cytosolic CRABPs may regulate the access of retinoic acid to the nuclear retinoic acid receptors. The sequence is that of Cellular retinoic acid-binding protein 1 (CRABP1) from Homo sapiens (Human).